The primary structure comprises 187 residues: GTP cyclohydrolase 1 (187 aa).

Zn(2+) is bound by residues Cys-76, His-79, and Cys-148.

The protein belongs to the GTP cyclohydrolase I family. As to quaternary structure, toroid-shaped homodecamer, composed of two pentamers of five dimers.

It carries out the reaction GTP + H2O = 7,8-dihydroneopterin 3'-triphosphate + formate + H(+). It functions in the pathway cofactor biosynthesis; 7,8-dihydroneopterin triphosphate biosynthesis; 7,8-dihydroneopterin triphosphate from GTP: step 1/1. The protein is GTP cyclohydrolase 1 of Acetivibrio thermocellus (strain ATCC 27405 / DSM 1237 / JCM 9322 / NBRC 103400 / NCIMB 10682 / NRRL B-4536 / VPI 7372) (Clostridium thermocellum).